The following is a 232-amino-acid chain: MNKVITDLDKALSALKDGDTILVGGFGLCGIPEYAIDYIYKKGIKDLIVVSNNCGVDDFGLGILLEKKQIKKIIASYVGENKIFESQMLNGEIEVVLTPQGTLAENLHAGGAGIPAYYTPTGVGTLIAQGKESREFNGKEYILERAITGDYGLIKAYKSDTLGNLVFRKTARNFNPLCAMAAKICVAEVEEIVPAGELDPDEIHLPGIYVQHIYKGEKFEKRIEKITTRSTK.

24–30 (GGFGLCG) is a binding site for CoA.

It belongs to the 3-oxoacid CoA-transferase subunit A family. As to quaternary structure, heterodimer of a subunit A and a subunit B.

It carries out the reaction a 3-oxo acid + succinyl-CoA = a 3-oxoacyl-CoA + succinate. This is Succinyl-CoA:3-ketoacid coenzyme A transferase subunit A (scoA) from Helicobacter pylori (strain ATCC 700392 / 26695) (Campylobacter pylori).